The following is a 73-amino-acid chain: DNA-directed RNA polymerase subunit epsilon (73 aa).

This sequence belongs to the RNA polymerase subunit epsilon family. RNAP is composed of a core of 2 alpha, a beta and a beta' subunit. The core is associated with a delta subunit, and at least one of epsilon or omega. When a sigma factor is associated with the core the holoenzyme is formed, which can initiate transcription.

The enzyme catalyses RNA(n) + a ribonucleoside 5'-triphosphate = RNA(n+1) + diphosphate. A non-essential component of RNA polymerase (RNAP). The chain is DNA-directed RNA polymerase subunit epsilon from Lactobacillus helveticus (strain DPC 4571).